Reading from the N-terminus, the 488-residue chain is UDP-N-acetylmuramoyl-L-alanyl-D-glutamate--2,6-diaminopimelate ligase (488 aa).

UDP-N-acetyl-alpha-D-muramoyl-L-alanyl-D-glutamate contacts are provided by residues L24, S26, and 41 to 43 (HQV). 113-119 (GTNGKTT) lines the ATP pocket. UDP-N-acetyl-alpha-D-muramoyl-L-alanyl-D-glutamate is bound by residues N154, 155-156 (TT), S182, Q188, and R190. Residue K222 is modified to N6-carboxylysine. Residues R386, 410–413 (DNPR), G461, and E465 contribute to the meso-2,6-diaminopimelate site. The Meso-diaminopimelate recognition motif signature appears at 410-413 (DNPR).

The protein belongs to the MurCDEF family. MurE subfamily. It depends on Mg(2+) as a cofactor. Carboxylation is probably crucial for Mg(2+) binding and, consequently, for the gamma-phosphate positioning of ATP.

It is found in the cytoplasm. It catalyses the reaction UDP-N-acetyl-alpha-D-muramoyl-L-alanyl-D-glutamate + meso-2,6-diaminopimelate + ATP = UDP-N-acetyl-alpha-D-muramoyl-L-alanyl-gamma-D-glutamyl-meso-2,6-diaminopimelate + ADP + phosphate + H(+). The protein operates within cell wall biogenesis; peptidoglycan biosynthesis. In terms of biological role, catalyzes the addition of meso-diaminopimelic acid to the nucleotide precursor UDP-N-acetylmuramoyl-L-alanyl-D-glutamate (UMAG) in the biosynthesis of bacterial cell-wall peptidoglycan. The protein is UDP-N-acetylmuramoyl-L-alanyl-D-glutamate--2,6-diaminopimelate ligase of Haemophilus influenzae (strain PittEE).